The following is a 661-amino-acid chain: MNNFSIISEYKPAGDQPKAIDEIIAGLSSKKRSQMLLGITGSGKTFTMANIIERTNRPTLIMAHNKTLAAQIYSEMKSLFPKNAVEYFVSYYDYYQPEAYIARTDTFIEKDSSINEQIDLMRHAATRSLLERRDVIVVSSVSCIYGLGSPDLYYQMVVNLEPGQSYLRDQLLNDLINLQYERNDIGFERGCFRVKGDNIDIFPSHYSDKAWRLSFFGNELEYIHEFDPLTGEKLAKLDKAIVFGNSHFVMPQETVNNAISGIEEELQKRLEFLKSQDKPLETQRLNQRTQYDLEMLTETGSCKGVENYSRFFTGRNAGEPPPTLFEYLPEDALLFVDESHVSVPQIRAMYNGDRARKKVLVEHGFRLPSALDNRPLKFEEWDKFRPQTVFVSATPGPFELEETGGTVVELIIRPTGLLDPECIIKPATNQVEDLISEIQTTIAQGFRVLVTTLTKKMAEDLTAYLQELKYKTSYLHSNVHTLERIEILRDLRQGTIDVLVGINLLREGLDIPECGLVAILDADKEGFLRSEVSLIQTIGRAARNSAGRVILYADKMTKSIDKAVSETLRRRQIQQEYNEKHGIIPKTINRAIHALAEFEKIDSKLDKKQAHTLFDNPAKLKTHIDKLKKEMLKAASNLEFEQAVKLRDQLKTLEEAALELS.

One can recognise a Helicase ATP-binding domain in the interval 25–182 (AGLSSKKRSQ…NDLINLQYER (158 aa)). 38 to 45 (GITGSGKT) serves as a coordination point for ATP. Residues 91 to 114 (YYDYYQPEAYIARTDTFIEKDSSI) carry the Beta-hairpin motif. Residues 430–592 (QVEDLISEIQ…IIPKTINRAI (163 aa)) enclose the Helicase C-terminal domain. The UVR domain maps to 621-656 (KTHIDKLKKEMLKAASNLEFEQAVKLRDQLKTLEEA).

The protein belongs to the UvrB family. Forms a heterotetramer with UvrA during the search for lesions. Interacts with UvrC in an incision complex.

The protein resides in the cytoplasm. The UvrABC repair system catalyzes the recognition and processing of DNA lesions. A damage recognition complex composed of 2 UvrA and 2 UvrB subunits scans DNA for abnormalities. Upon binding of the UvrA(2)B(2) complex to a putative damaged site, the DNA wraps around one UvrB monomer. DNA wrap is dependent on ATP binding by UvrB and probably causes local melting of the DNA helix, facilitating insertion of UvrB beta-hairpin between the DNA strands. Then UvrB probes one DNA strand for the presence of a lesion. If a lesion is found the UvrA subunits dissociate and the UvrB-DNA preincision complex is formed. This complex is subsequently bound by UvrC and the second UvrB is released. If no lesion is found, the DNA wraps around the other UvrB subunit that will check the other stand for damage. This is UvrABC system protein B from Rickettsia rickettsii (strain Sheila Smith).